The following is a 134-amino-acid chain: UPF0412 protein YaaI (134 aa).

An N-terminal signal peptide occupies residues 1 to 23; the sequence is MKSVFTLSASLAISLLLCCTAQA.

Belongs to the UPF0412 family.

In Escherichia coli (strain SMS-3-5 / SECEC), this protein is UPF0412 protein YaaI.